The chain runs to 74 residues: Exodeoxyribonuclease 7 small subunit (74 aa).

The protein belongs to the XseB family. Heterooligomer composed of large and small subunits.

Its subcellular location is the cytoplasm. It catalyses the reaction Exonucleolytic cleavage in either 5'- to 3'- or 3'- to 5'-direction to yield nucleoside 5'-phosphates.. Functionally, bidirectionally degrades single-stranded DNA into large acid-insoluble oligonucleotides, which are then degraded further into small acid-soluble oligonucleotides. The sequence is that of Exodeoxyribonuclease 7 small subunit from Neisseria meningitidis serogroup A / serotype 4A (strain DSM 15465 / Z2491).